A 153-amino-acid polypeptide reads, in one-letter code: Alpha-amylase inhibitor 0.28 (153 aa).

The N-terminal stretch at Met-1 to Asn-30 is a signal peptide. 5 cysteine pairs are disulfide-bonded: Cys-37/Cys-84, Cys-51/Cys-72, Cys-59/Cys-112, Cys-73/Cys-128, and Cys-86/Cys-143.

This sequence belongs to the protease inhibitor I6 (cereal trypsin/alpha-amylase inhibitor) family. Monomer. In terms of processing, the disulfide bonds are essential for the inhibitor activity. In terms of tissue distribution, endosperm.

Its subcellular location is the secreted. Alpha-amylase inhibitor. The chain is Alpha-amylase inhibitor 0.28 (IMA1) from Triticum aestivum (Wheat).